A 469-amino-acid polypeptide reads, in one-letter code: MARGLGAPHWVAVGLLTWAALGLLVAGHGGHGDLHEDLHEDFHGHSHRRSHEDFHHGHSYAHGHGHTHESIWHGHTHGHEHGHAHEDLHHGHSHGQSHESLYHRGHGHDHEHSHGGYGESGAPGIKQDLDTVTLWAYALGATVLISAAPFFVLFLIPVESNSPRHRSLLQILLSFASGGLLGDAFLHLIPHALEPHSHHPLEQPGHGHSHSGQGPILSVGLWVLSGIVAFLVVEKFVRHVKGGHGHSHGHGHTHGHTQGSHGHGTQKYPSKEKQSSEEEEKEANGSRKRKGGSTRLKDGPLRPQNSEEEKTGSDLRVSGYLNLAADLAHNFTDGLAIGASFRGGRGLGILTTMTVLLHEVPHEVGDFAILVQSGCSKKQAMRLQLLTAIGALAGTACALLTEGGAVGSEVAGGTGSGWVLPFTAGGFIYVATVSVLPELLREASPLQSLLEVLGLLGGVVMMVLIAHLE.

Residues 5–25 (LGAPHWVAVGLLTWAALGLLV) form a helical membrane-spanning segment. 2 stretches are compositionally biased toward basic and acidic residues: residues 43 to 56 (HGHS…DFHH) and 66 to 114 (HTHE…EHSH). The disordered stretch occupies residues 43–122 (HGHSHRRSHE…SHGGYGESGA (80 aa)). H66 bears the Pros-methylhistidine mark. Transmembrane regions (helical) follow at residues 138 to 158 (ALGA…LIPV), 169 to 189 (LQIL…LHLI), and 214 to 234 (GPIL…LVVE). A compositionally biased stretch (basic residues) spans 242-255 (GGHGHSHGHGHTHG). Positions 242–313 (GGHGHSHGHG…QNSEEEKTGS (72 aa)) are disordered. Residues 256-266 (HTQGSHGHGTQ) are compositionally biased toward low complexity. S275 and S276 each carry phosphoserine. A compositionally biased stretch (basic and acidic residues) spans 295–313 (RLKDGPLRPQNSEEEKTGS). 3 consecutive transmembrane segments (helical) span residues 386–406 (LTAI…GGAV), 417–437 (GWVL…SVLP), and 448–468 (SLLE…IAHL).

It belongs to the ZIP transporter (TC 2.A.5) family. KE4/Catsup subfamily. Homodimer. Post-translationally, methylation at some His residue by METTL9 leads to reduced zinc-binding. In terms of processing, rapidly phosphorylated by CK2 following Zn(2+) treatment. This phosphorylation is required for efficient cytosolic Zn(2+) release.

The protein localises to the endoplasmic reticulum membrane. It is found in the golgi apparatus. It localises to the cis-Golgi network membrane. The catalysed reaction is Zn(2+)(in) = Zn(2+)(out). Transports Zn(2+) from the endoplasmic reticulum (ER)/Golgi apparatus to the cytosol, playing an essential role in the regulation of cytosolic zinc levels. Acts as a gatekeeper of zinc release from intracellular stores, requiring post-translational activation by phosphorylation, resulting in activation of multiple downstream pathways leading to cell growth and proliferation. Has an essential role in B cell development and is required for proper B cell receptor signaling. Plays an important role in maintaining intestinal epithelial homeostasis and skin dermis development by regulating ER function. Controls cell signaling pathways involved in glucose metabolism in skeletal muscle. Has a protective role against ER stress in different biological contexts. Mediates Zn(2+)-induced ferroptosis. The polypeptide is Zinc transporter SLC39A7 (Canis lupus familiaris (Dog)).